We begin with the raw amino-acid sequence, 377 residues long: Lipoyl synthase, mitochondrial (377 aa).

Cys103, Cys108, Cys114, Cys134, Cys138, Cys141, and Ser349 together coordinate [4Fe-4S] cluster. The Radical SAM core domain occupies Glu119–Leu338.

The protein belongs to the radical SAM superfamily. Lipoyl synthase family. [4Fe-4S] cluster serves as cofactor.

The protein resides in the mitochondrion. It catalyses the reaction [[Fe-S] cluster scaffold protein carrying a second [4Fe-4S](2+) cluster] + N(6)-octanoyl-L-lysyl-[protein] + 2 oxidized [2Fe-2S]-[ferredoxin] + 2 S-adenosyl-L-methionine + 4 H(+) = [[Fe-S] cluster scaffold protein] + N(6)-[(R)-dihydrolipoyl]-L-lysyl-[protein] + 4 Fe(3+) + 2 hydrogen sulfide + 2 5'-deoxyadenosine + 2 L-methionine + 2 reduced [2Fe-2S]-[ferredoxin]. Its pathway is protein modification; protein lipoylation via endogenous pathway; protein N(6)-(lipoyl)lysine from octanoyl-[acyl-carrier-protein]: step 2/2. Functionally, catalyzes the radical-mediated insertion of two sulfur atoms into the C-6 and C-8 positions of the octanoyl moiety bound to the lipoyl domains of lipoate-dependent enzymes, thereby converting the octanoylated domains into lipoylated derivatives. This Drosophila sechellia (Fruit fly) protein is Lipoyl synthase, mitochondrial.